Reading from the N-terminus, the 544-residue chain is Glucose starvation modulator protein 1 (544 aa).

Residues 20–48 constitute a DNA-binding region (zn(2)-C6 fungal-type); that stretch reads CVFCHSKHLQCSNERPCKNCMKRNLGDQC. The interval 65-93 is disordered; it reads KKMKSRTNSISSSYRSPSVSESPQNPYTH. Over residues 70-86 the composition is skewed to low complexity; the sequence is RTNSISSSYRSPSVSES. Residues 403-475 form the PAS domain; it reads SLIDYEKLLL…FKLFKSVAVG (73 aa).

This sequence belongs to the ERT1/acuK family.

The protein resides in the nucleus. Functionally, transcription factor which regulates nonfermentable carbon utilization. This is Glucose starvation modulator protein 1 (GSM1) from Debaryomyces hansenii (strain ATCC 36239 / CBS 767 / BCRC 21394 / JCM 1990 / NBRC 0083 / IGC 2968) (Yeast).